The primary structure comprises 383 residues: TOM1-like protein 2 (383 aa).

Positions 45 to 178 (ATLETLEEPN…GLHARGEENS (134 aa)) constitute a VHS domain. Positions 223–310 (LSIKDKKEQI…VLSSYKKPDE (88 aa)) constitute a GAT domain. The tract at residues 305-383 (YKKPDETEKK…LGLSSDEDEK (79 aa)) is disordered. Composition is skewed to basic and acidic residues over residues 306-316 (KKPDETEKKAS) and 339-354 (EPVK…KHSE). Residues serine 377 and serine 378 each carry the phosphoserine modification.

Belongs to the TOM1 family. Ubiquitously expressed.

The protein localises to the cytoplasm. It is found in the membrane. In terms of biological role, binds ubiquitin in vitro. Might contribute to the loading of the ESCRT machinery. This Arabidopsis thaliana (Mouse-ear cress) protein is TOM1-like protein 2.